Here is a 202-residue protein sequence, read N- to C-terminus: Glycerol-3-phosphate acyltransferase (202 aa).

4 helical membrane-spanning segments follow: residues 2 to 22 (ANLL…AVVV), 85 to 105 (LAMV…HRFA), 119 to 139 (AINP…AFFF), and 158 to 178 (VLME…ILLI).

This sequence belongs to the PlsY family. Probably interacts with PlsX.

It is found in the cell inner membrane. The catalysed reaction is an acyl phosphate + sn-glycerol 3-phosphate = a 1-acyl-sn-glycero-3-phosphate + phosphate. It participates in lipid metabolism; phospholipid metabolism. Its function is as follows. Catalyzes the transfer of an acyl group from acyl-phosphate (acyl-PO(4)) to glycerol-3-phosphate (G3P) to form lysophosphatidic acid (LPA). This enzyme utilizes acyl-phosphate as fatty acyl donor, but not acyl-CoA or acyl-ACP. The protein is Glycerol-3-phosphate acyltransferase of Cupriavidus pinatubonensis (strain JMP 134 / LMG 1197) (Cupriavidus necator (strain JMP 134)).